A 506-amino-acid polypeptide reads, in one-letter code: Chromosomal replication initiator protein DnaA (506 aa).

Residues 1–77 (MECATTATTP…IWAEESGAKR (77 aa)) are domain I, interacts with DnaA modulators. Residues 77–162 (RRVDLAVRNA…AVAGDVASGS (86 aa)) form a domain II region. Composition is skewed to basic and acidic residues over residues 103–112 (TERTDMHSGD) and 121–142 (SDGR…RAVE). The disordered stretch occupies residues 103–142 (TERTDMHSGDTRQQSARISDGRSTDARGADGRGSDARAVE). The segment at 163-384 (PLDARLTFET…GALNKLLAFN (222 aa)) is domain III, AAA+ region. ATP is bound by residues Gly210, Gly212, Lys213, and Thr214. The domain IV, binds dsDNA stretch occupies residues 385–506 (QLTGEPVTLE…EVLKRLALEA (122 aa)).

Belongs to the DnaA family. Oligomerizes as a right-handed, spiral filament on DNA at oriC.

Its subcellular location is the cytoplasm. Functionally, plays an essential role in the initiation and regulation of chromosomal replication. ATP-DnaA binds to the origin of replication (oriC) to initiate formation of the DNA replication initiation complex once per cell cycle. Binds the DnaA box (a 9 base pair repeat at the origin) and separates the double-stranded (ds)DNA. Forms a right-handed helical filament on oriC DNA; dsDNA binds to the exterior of the filament while single-stranded (ss)DNA is stabiized in the filament's interior. The ATP-DnaA-oriC complex binds and stabilizes one strand of the AT-rich DNA unwinding element (DUE), permitting loading of DNA polymerase. After initiation quickly degrades to an ADP-DnaA complex that is not apt for DNA replication. Binds acidic phospholipids. The sequence is that of Chromosomal replication initiator protein DnaA from Xanthobacter autotrophicus (strain ATCC BAA-1158 / Py2).